Reading from the N-terminus, the 185-residue chain is Hypoxanthine/guanine phosphoribosyltransferase (185 aa).

Belongs to the purine/pyrimidine phosphoribosyltransferase family. Archaeal HPRT subfamily. In terms of assembly, homodimer.

It is found in the cytoplasm. The catalysed reaction is IMP + diphosphate = hypoxanthine + 5-phospho-alpha-D-ribose 1-diphosphate. It carries out the reaction GMP + diphosphate = guanine + 5-phospho-alpha-D-ribose 1-diphosphate. The protein operates within purine metabolism; IMP biosynthesis via salvage pathway; IMP from hypoxanthine: step 1/1. In terms of biological role, catalyzes a salvage reaction resulting in the formation of IMP that is energically less costly than de novo synthesis. The sequence is that of Hypoxanthine/guanine phosphoribosyltransferase from Methanococcus maripaludis (strain C6 / ATCC BAA-1332).